Reading from the N-terminus, the 151-residue chain is Large ribosomal subunit protein uL30 (151 aa).

Belongs to the universal ribosomal protein uL30 family. In terms of assembly, part of the 50S ribosomal subunit.

The sequence is that of Large ribosomal subunit protein uL30 from Methanothrix thermoacetophila (strain DSM 6194 / JCM 14653 / NBRC 101360 / PT) (Methanosaeta thermophila).